The chain runs to 488 residues: Peptidoglycan endopeptidase LytF (488 aa).

The first 26 residues, 1 to 26, serve as a signal peptide directing secretion; the sequence is MKKKLAAGLTASAIVGTTLVVTPAEA. LysM domains follow at residues 27–70 and 92–135; these read ATIK…TLTI and SVYT…KLKV. 3 disordered regions span residues 70 to 93, 137 to 176, and 218 to 239; these read IPGS…GSSV, GTVS…TGTY, and KSSG…TSAT. 2 stretches are compositionally biased toward low complexity: residues 72–93 and 140–172; these read GSKS…GSSV and SSSS…SSSS. In terms of domain architecture, LysM 3 spans 174–217; the sequence is GTYKVQLGDSLWKIANKVNMSIAELKVLNNLKSDTIYVNQVLKT. Positions 240-283 constitute a LysM 4 domain; that stretch reads TKYTVKSGDSLWKIANNYNLTVQQIRNINNLKSDVLYVGQVLKL. Residues 286 to 306 form a disordered region; the sequence is KASSGSSSSSSSSSNASSGTT. In terms of domain architecture, LysM 5 spans 307–350; that stretch reads TTYTVKSGDSLWVIAQKFNVTAQQIREKNNLKTDVLQVGQKLVI. The NlpC/P60 domain maps to 370–488; that stretch reads SAKINTMISA…QRYLGAKRYF (119 aa). Cys-400 serves as the catalytic Nucleophile. His-449 functions as the Proton acceptor in the catalytic mechanism. Asn-461 is a catalytic residue.

The protein belongs to the peptidase C40 family.

It is found in the secreted. It localises to the cell wall. With respect to regulation, is inhibited in vitro by para-hydroxymercuribenzoate, a sulfydryl inhibitor. Functionally, cell wall hydrolase that cleaves gamma-D-glutamate-meso-diaminopimelate bonds in peptidoglycan. LytF is necessary and sufficient for vegetative daughter cell separation, and also seems to play a role in cell autolysis. This is Peptidoglycan endopeptidase LytF (lytF) from Bacillus subtilis (strain 168).